Consider the following 423-residue polypeptide: Replication factor C large subunit (423 aa).

Position 63–70 (Gly-63–Thr-70) interacts with ATP.

This sequence belongs to the activator 1 small subunits family. RfcL subfamily. Heteromultimer composed of small subunits (RfcS) and large subunits (RfcL).

Functionally, part of the RFC clamp loader complex which loads the PCNA sliding clamp onto DNA. The chain is Replication factor C large subunit from Pyrobaculum islandicum (strain DSM 4184 / JCM 9189 / GEO3).